Here is an 84-residue protein sequence, read N- to C-terminus: Toxin-like TcoNTxP1 (84 aa).

The first 19 residues, 1–19, serve as a signal peptide directing secretion; that stretch reads MKRMILFTSCLLLIDIVVG. The region spanning 21–82 is the LCN-type CS-alpha/beta domain; that stretch reads KEGYPADSKG…VWDSATNKCG (62 aa). 4 cysteine pairs are disulfide-bonded: cysteine 31–cysteine 81, cysteine 35–cysteine 57, cysteine 43–cysteine 62, and cysteine 47–cysteine 64. Cysteine 81 carries the cysteine amide modification. Positions 82–84 are excised as a propeptide; sequence GKK.

In terms of tissue distribution, expressed by the venom gland.

The protein localises to the secreted. Its function is as follows. This protein is not toxic. It induces an immune response similar to that induced by whole venom. Thus, polyclonal antibodies raised against this protein can neutralize the effects of the venom. The protein is Toxin-like TcoNTxP1 of Tityus costatus (Brazilian scorpion).